Consider the following 558-residue polypeptide: Putative cation/proton antiporter YbaL (558 aa).

At M1–H3 the chain is on the periplasmic side. The chain crosses the membrane as a helical span at residues A4 to L24. At A25–S31 the chain is on the cytoplasmic side. Residues P32–A52 traverse the membrane as a helical segment. Over D53–K55 the chain is Periplasmic. The helical transmembrane segment at L56–F76 threads the bilayer. At S77 to K85 the chain is on the cytoplasmic side. A helical membrane pass occupies residues A86–L106. Residues S107 to W112 are Periplasmic-facing. Residues S113–L133 traverse the membrane as a helical segment. The Cytoplasmic segment spans residues R134 to Q148. The helical transmembrane segment at I149–P169 threads the bilayer. Residues A170–L185 lie on the Periplasmic side of the membrane. Residues A186–V206 form a helical membrane-spanning segment. Over G207–E225 the chain is Cytoplasmic. The chain crosses the membrane as a helical span at residues L226–F246. D247 is a topological domain (periplasmic). A helical membrane pass occupies residues V248–H268. Residues R269–D279 are Cytoplasmic-facing. The chain crosses the membrane as a helical span at residues A280–Q300. The Periplasmic segment spans residues Q301–L303. A helical membrane pass occupies residues A304–V324. The Cytoplasmic portion of the chain corresponds to R325–T336. A helical membrane pass occupies residues I337 to A357. Over L358 to N367 the chain is Periplasmic. A helical transmembrane segment spans residues L368–E388. Residues K389–G558 lie on the Cytoplasmic side of the membrane. The 118-residue stretch at C417–M534 folds into the RCK N-terminal domain. Residues R427–V428, E447–T448, N467–A468, E494, and R514 contribute to the AMP site.

This sequence belongs to the monovalent cation:proton antiporter 2 (CPA2) transporter (TC 2.A.37) family.

The protein resides in the cell inner membrane. The polypeptide is Putative cation/proton antiporter YbaL (ybaL) (Escherichia coli (strain K12)).